The sequence spans 273 residues: Undecaprenyl-diphosphatase (273 aa).

A run of 6 helical transmembrane segments spans residues 43–63, 82–102, 109–129, 185–205, 214–234, and 249–269; these read IGNV…CWEY, KFVL…VLLI, LFNP…ILWA, TEFS…YDVL, ADLP…FVAV, and FAWY…LGWI.

The protein belongs to the UppP family.

It localises to the cell inner membrane. The catalysed reaction is di-trans,octa-cis-undecaprenyl diphosphate + H2O = di-trans,octa-cis-undecaprenyl phosphate + phosphate + H(+). Catalyzes the dephosphorylation of undecaprenyl diphosphate (UPP). Confers resistance to bacitracin. The chain is Undecaprenyl-diphosphatase from Laribacter hongkongensis (strain HLHK9).